Reading from the N-terminus, the 144-residue chain is Large ribosomal subunit protein uL11 (144 aa).

It belongs to the universal ribosomal protein uL11 family. In terms of assembly, part of the ribosomal stalk of the 50S ribosomal subunit. Interacts with L10 and the large rRNA to form the base of the stalk. L10 forms an elongated spine to which L12 dimers bind in a sequential fashion forming a multimeric L10(L12)X complex. One or more lysine residues are methylated.

Functionally, forms part of the ribosomal stalk which helps the ribosome interact with GTP-bound translation factors. This Corynebacterium glutamicum (strain R) protein is Large ribosomal subunit protein uL11.